We begin with the raw amino-acid sequence, 910 residues long: ZZ-type zinc finger-containing protein 3 (910 aa).

Disordered regions lie at residues 41-117 (AHPE…RQAE) and 133-153 (EATNSSEEDSPVKPDKEPGEH). Residues 67–84 (QKGTNNGRTSDVRQQSAR) show a composition bias toward polar residues. Phosphoserine is present on residues serine 89, serine 96, serine 137, serine 138, and serine 142. Residues 96 to 116 (SSSEKDDLERQALESCERRQA) are compositionally biased toward basic and acidic residues. The segment covering 142 to 153 (SPVKPDKEPGEH) has biased composition (basic and acidic residues). Lysine 283 is covalently cross-linked (Glycyl lysine isopeptide (Lys-Gly) (interchain with G-Cter in SUMO2)). 3 disordered regions span residues 303–358 (TAES…VSGE), 373–444 (TSLS…PQDG), and 609–641 (ARPKSPLDPKKDGESLSYSMLPLSDGPEGSHNR). Composition is skewed to polar residues over residues 331 to 347 (SSASKEQCNENSSNPLD) and 397 to 434 (SSPTKTTSPYRENGQLEETNLSPQETNTTVSDHVSESP). At lysine 401 the chain carries N6-acetyllysine. At serine 613 the chain carries Phosphoserine. Residues 613–622 (SPLDPKKDGE) are compositionally biased toward basic and acidic residues. A Glycyl lysine isopeptide (Lys-Gly) (interchain with G-Cter in SUMO2) cross-link involves residue lysine 654. Residues 654–714 (KPETFNQLWT…RVQKYFIKLT (61 aa)) enclose the HTH myb-type domain. The H-T-H motif DNA-binding region spans 687–710 (WQKIADELGNRTAKQVASRVQKYF). Residue lysine 708 is modified to N6-acetyllysine. Residue lysine 715 forms a Glycyl lysine isopeptide (Lys-Gly) (interchain with G-Cter in SUMO2) linkage. The segment at 825–884 (HVGFKCDNCGVEPIQGVRWHCQDCPPEMSLDFCDSCSDCPHETDIHKEDHQLEPVYKSET) adopts a ZZ-type zinc-finger fold. Residues cysteine 830, cysteine 833, cysteine 845, cysteine 848, cysteine 857, cysteine 860, histidine 870, and histidine 874 each coordinate Zn(2+).

Component of the ADA2A-containing complex (ATAC), composed of KAT14, KAT2A, TADA2L, TADA3L, ZZ3, MBIP, WDR5, YEATS2, CCDC101 and DR1. Interacts via (ZZ-type zinc finger) with histone H3 in a methylation-independent manner and acetylation on 'Lys-4' (H3K4ac) moderately enhances the interaction.

Its subcellular location is the nucleus. In terms of biological role, histone H3 reader that is required for the ATAC complex-mediated maintenance of histone acetylation and gene activation. Component of the ATAC complex, a complex with histone acetyltransferase activity on histones H3 and H4. The chain is ZZ-type zinc finger-containing protein 3 (Zzz3) from Mus musculus (Mouse).